The following is a 209-amino-acid chain: Orotate phosphoribosyltransferase (209 aa).

5-phospho-alpha-D-ribose 1-diphosphate contacts are provided by residues arginine 96, lysine 100, histidine 102, and 122-130 (EDLISTGGS). Serine 126 lines the orotate pocket.

The protein belongs to the purine/pyrimidine phosphoribosyltransferase family. PyrE subfamily. Homodimer. Mg(2+) is required as a cofactor.

It catalyses the reaction orotidine 5'-phosphate + diphosphate = orotate + 5-phospho-alpha-D-ribose 1-diphosphate. Its pathway is pyrimidine metabolism; UMP biosynthesis via de novo pathway; UMP from orotate: step 1/2. In terms of biological role, catalyzes the transfer of a ribosyl phosphate group from 5-phosphoribose 1-diphosphate to orotate, leading to the formation of orotidine monophosphate (OMP). This Listeria monocytogenes serotype 4b (strain F2365) protein is Orotate phosphoribosyltransferase.